The chain runs to 330 residues: GMP reductase (330 aa).

The active-site Thioimidate intermediate is the cysteine 180. Position 209 to 232 (209 to 232) interacts with NADP(+); that stretch reads LIADGGIRHNGDIAKSVRFGASMV.

Belongs to the IMPDH/GMPR family. GuaC type 2 subfamily.

It catalyses the reaction IMP + NH4(+) + NADP(+) = GMP + NADPH + 2 H(+). In terms of biological role, catalyzes the irreversible NADPH-dependent deamination of GMP to IMP. It functions in the conversion of nucleobase, nucleoside and nucleotide derivatives of G to A nucleotides, and in maintaining the intracellular balance of A and G nucleotides. The chain is GMP reductase from Lactobacillus acidophilus (strain ATCC 700396 / NCK56 / N2 / NCFM).